A 198-amino-acid chain; its full sequence is Beta-crystallin A1-2 (198 aa).

An N-terminal arm region spans residues 1–13 (MAQINPLPVPLGP). 2 consecutive Beta/gamma crystallin 'Greek key' domains span residues 14–53 (WKIT…KVEC) and 54–100 (GAWI…RPIC). The interval 101–106 (SANHIE) is connecting peptide. 2 Beta/gamma crystallin 'Greek key' domains span residues 107-148 (SKLV…KVQC) and 149-197 (GAWV…RRIQ).

Belongs to the beta/gamma-crystallin family. As to quaternary structure, homo/heterodimer, or complexes of higher-order. The structure of beta-crystallin oligomers seems to be stabilized through interactions between the N-terminal arms. Post-translationally, the N-terminus is blocked.

Its function is as follows. Crystallins are the dominant structural components of the vertebrate eye lens. This is Beta-crystallin A1-2 from Aquarana catesbeiana (American bullfrog).